Reading from the N-terminus, the 360-residue chain is Phospho-N-acetylmuramoyl-pentapeptide-transferase (360 aa).

The Periplasmic segment spans residues 1 to 25; sequence MLVWLAEHLVKYYSGFNVFSYLTFR. Residues 26-46 form a helical membrane-spanning segment; that stretch reads AIVSLLTALFISLWMGPRMIA. Over 47 to 71 the chain is Cytoplasmic; sequence RLQKLSFGQVVRNDGPESHFSKRGT. A helical membrane pass occupies residues 72 to 92; sequence PTMGGIMILTAIVISVLLWAY. A topological domain (periplasmic) is located at residue Pro93. Residues 94–114 form a helical membrane-spanning segment; that stretch reads SNPYVWCVLVVLIGYGIIGFV. Over 115-131 the chain is Cytoplasmic; that stretch reads DDYHKVVRKDTKGLIAR. The helical transmembrane segment at 132–152 threads the bilayer; that stretch reads WKYFWMSVIALGVAFALYLVG. Over 153-167 the chain is Periplasmic; the sequence is KDTPATQLVVPFFKD. The helical transmembrane segment at 168–188 threads the bilayer; the sequence is VMPQLGLFYILLSYFVIVGTG. Residues 189-198 lie on the Cytoplasmic side of the membrane; the sequence is NAVNLTDGLD. Residues 199-219 form a helical membrane-spanning segment; that stretch reads GLAIMPTVFVAAGFALVAWAT. Residues 220–235 lie on the Periplasmic side of the membrane; sequence GNMNFANYLHIPYLRY. Residues 236 to 256 traverse the membrane as a helical segment; the sequence is AGELVIVCTAIVGAGLGFLWF. Residues 257–262 lie on the Cytoplasmic side of the membrane; the sequence is NTYPAQ. A helical membrane pass occupies residues 263–283; that stretch reads VFMGDVGSLALGGALGIIAVL. The Periplasmic portion of the chain corresponds to 284 to 287; it reads LRQE. The chain crosses the membrane as a helical span at residues 288–308; the sequence is FLLVIMGGVFVVETLSVILQV. Over 309-337 the chain is Cytoplasmic; that stretch reads GSFKLRGQRIFRMAPIHHHYELKGWPEPR. Residues 338–358 traverse the membrane as a helical segment; that stretch reads VIVRFWIISLMLVLIGLATLK. The Periplasmic portion of the chain corresponds to 359-360; it reads VR.

It belongs to the glycosyltransferase 4 family. MraY subfamily. It depends on Mg(2+) as a cofactor.

The protein resides in the cell inner membrane. It catalyses the reaction UDP-N-acetyl-alpha-D-muramoyl-L-alanyl-gamma-D-glutamyl-meso-2,6-diaminopimeloyl-D-alanyl-D-alanine + di-trans,octa-cis-undecaprenyl phosphate = di-trans,octa-cis-undecaprenyl diphospho-N-acetyl-alpha-D-muramoyl-L-alanyl-D-glutamyl-meso-2,6-diaminopimeloyl-D-alanyl-D-alanine + UMP. Its pathway is cell wall biogenesis; peptidoglycan biosynthesis. Catalyzes the initial step of the lipid cycle reactions in the biosynthesis of the cell wall peptidoglycan: transfers peptidoglycan precursor phospho-MurNAc-pentapeptide from UDP-MurNAc-pentapeptide onto the lipid carrier undecaprenyl phosphate, yielding undecaprenyl-pyrophosphoryl-MurNAc-pentapeptide, known as lipid I. The protein is Phospho-N-acetylmuramoyl-pentapeptide-transferase of Salmonella paratyphi A (strain ATCC 9150 / SARB42).